A 653-amino-acid polypeptide reads, in one-letter code: tRNA-guanine(15) transglycosylase (653 aa).

Asp91 functions as the Nucleophile in the catalytic mechanism. Substrate is bound by residues Asp126 and Ala193. 3 residues coordinate Zn(2+): Cys276, Cys278, and Cys281. Residues 578-653 (AWRVAVNEES…QAVKTRKGGF (76 aa)) enclose the PUA domain.

It belongs to the archaeosine tRNA-ribosyltransferase family. It depends on Zn(2+) as a cofactor.

It catalyses the reaction guanosine(15) in tRNA + 7-cyano-7-deazaguanine = 7-cyano-7-carbaguanosine(15) in tRNA + guanine. It functions in the pathway tRNA modification; archaeosine-tRNA biosynthesis. In terms of biological role, exchanges the guanine residue with 7-cyano-7-deazaguanine (preQ0) at position 15 in the dihydrouridine loop (D-loop) of archaeal tRNAs. The sequence is that of tRNA-guanine(15) transglycosylase from Methanothermobacter thermautotrophicus (strain ATCC 29096 / DSM 1053 / JCM 10044 / NBRC 100330 / Delta H) (Methanobacterium thermoautotrophicum).